Reading from the N-terminus, the 300-residue chain is Spermine synthase SPE4 (300 aa).

Ser-5 is modified (phosphoserine). The PABS domain maps to 12–255 (DGWFREINDK…GQLGLIVCSN (244 aa)). Residues Gln-44, Asp-99, Glu-119, and 151–152 (DG) each bind S-adenosyl 3-(methylsulfanyl)propylamine. Asp-174 (proton acceptor) is an active-site residue. Asp-177 is a spermidine binding site.

Belongs to the spermidine/spermine synthase family.

It catalyses the reaction S-adenosyl 3-(methylsulfanyl)propylamine + spermidine = spermine + S-methyl-5'-thioadenosine + H(+). It participates in amine and polyamine biosynthesis; spermine biosynthesis; spermine from spermidine: step 1/1. The chain is Spermine synthase SPE4 (SPE4) from Saccharomyces cerevisiae (strain ATCC 204508 / S288c) (Baker's yeast).